The primary structure comprises 938 residues: ATP-dependent 6-phosphofructokinase subunit beta (938 aa).

The interval 1–552 (MTQSLPLLNG…HLDNFMAINS (552 aa)) is N-terminal catalytic PFK domain 1. ATP is bound by residues Gly-185, 249 to 250 (RC), and 279 to 282 (GDGS). Residue Asp-280 participates in Mg(2+) binding. Beta-D-fructose 6-phosphate is bound by residues 325 to 327 (SID), Arg-362, 369 to 371 (MGR), Glu-426, Arg-454, and 460 to 463 (HVQR). The active-site Proton acceptor is Asp-327. The segment at 553 to 566 (ADHIEPKLPEHTHM) is interdomain linker. The tract at residues 567 to 938 (KIAIVNVGAP…ADHLVGRKKL (372 aa)) is C-terminal regulatory PFK domain 2. Beta-D-fructose 2,6-bisphosphate is bound by residues Arg-637, 695 to 699 (TLSNN), Arg-733, 740 to 742 (QGG), Lys-826, 832 to 835 (HVQQ), and Arg-915.

Belongs to the phosphofructokinase type A (PFKA) family. ATP-dependent PFK group I subfamily. Eukaryotic two domain clade 'E' sub-subfamily. As to quaternary structure, heterooctamer of 4 alpha and 4 beta chains. Mg(2+) is required as a cofactor.

The protein localises to the cytoplasm. The enzyme catalyses beta-D-fructose 6-phosphate + ATP = beta-D-fructose 1,6-bisphosphate + ADP + H(+). It functions in the pathway carbohydrate degradation; glycolysis; D-glyceraldehyde 3-phosphate and glycerone phosphate from D-glucose: step 3/4. Allosterically activated by ADP, AMP, or fructose 2,6-bisphosphate, and allosterically inhibited by ATP or citrate. Its function is as follows. Catalyzes the phosphorylation of D-fructose 6-phosphate to fructose 1,6-bisphosphate by ATP, the first committing step of glycolysis. This is ATP-dependent 6-phosphofructokinase subunit beta (PFK2) from Kluyveromyces lactis (strain ATCC 8585 / CBS 2359 / DSM 70799 / NBRC 1267 / NRRL Y-1140 / WM37) (Yeast).